Here is a 204-residue protein sequence, read N- to C-terminus: 8-oxoguanine DNA glycosylase/AP lyase (204 aa).

Catalysis depends on residues Lys128 and Asp146.

This sequence belongs to the type-2 OGG1 family.

The catalysed reaction is 2'-deoxyribonucleotide-(2'-deoxyribose 5'-phosphate)-2'-deoxyribonucleotide-DNA = a 3'-end 2'-deoxyribonucleotide-(2,3-dehydro-2,3-deoxyribose 5'-phosphate)-DNA + a 5'-end 5'-phospho-2'-deoxyribonucleoside-DNA + H(+). Catalyzes the excision of an oxidatively damaged form of guanine (7,8-dihydro-8-oxoguanine = 8-oxoG) from DNA. Also cleaves the DNA backbone at apurinic/apyrimidinic sites (AP sites). The polypeptide is 8-oxoguanine DNA glycosylase/AP lyase (Sulfurisphaera tokodaii (strain DSM 16993 / JCM 10545 / NBRC 100140 / 7) (Sulfolobus tokodaii)).